The primary structure comprises 148 residues: Large ribosomal subunit protein bL9 (148 aa).

The protein belongs to the bacterial ribosomal protein bL9 family.

Its function is as follows. Binds to the 23S rRNA. The protein is Large ribosomal subunit protein bL9 of Pseudomonas aeruginosa (strain LESB58).